We begin with the raw amino-acid sequence, 102 residues long: MAKQKIRIRLKAYEHRILDQSADKIVETAKRTGADVSGPIPLPTERSLYTVIRATHKYKDSREQFEMRTHKRLIDIVNPTPKTVDALMKLDLPSGVNIEIKL.

Belongs to the universal ribosomal protein uS10 family. Part of the 30S ribosomal subunit.

Its function is as follows. Involved in the binding of tRNA to the ribosomes. This chain is Small ribosomal subunit protein uS10, found in Enterococcus faecalis (strain ATCC 700802 / V583).